We begin with the raw amino-acid sequence, 612 residues long: UvrABC system protein C (612 aa).

Positions 13 to 92 (AKPGVYIMHD…IKEHRPKYNT (80 aa)) constitute a GIY-YIG domain. Residues 204-239 (KKIMDRLTTQMQEASEKMEYEEAARYRDLLMSVKQV) enclose the UVR domain.

This sequence belongs to the UvrC family. As to quaternary structure, interacts with UvrB in an incision complex.

Its subcellular location is the cytoplasm. Functionally, the UvrABC repair system catalyzes the recognition and processing of DNA lesions. UvrC both incises the 5' and 3' sides of the lesion. The N-terminal half is responsible for the 3' incision and the C-terminal half is responsible for the 5' incision. This is UvrABC system protein C from Lachnospira eligens (strain ATCC 27750 / DSM 3376 / VPI C15-48 / C15-B4) (Eubacterium eligens).